Here is a 112-residue protein sequence, read N- to C-terminus: cAMP-regulated phosphoprotein 19 (112 aa).

M1 carries the post-translational modification N-acetylmethionine. Residues 1–11 show a composition bias toward low complexity; it reads MSAEVPEAASA. The segment at 1 to 49 is disordered; the sequence is MSAEVPEAASAEEQKEMEDKVTSPEKAEEAKLKARYPHLGQKPGGSDFL. At S2 the chain carries N-acetylserine. Phosphoserine occurs at positions 2 and 23. A compositionally biased stretch (basic and acidic residues) spans 12–32; that stretch reads EEQKEMEDKVTSPEKAEEAKL. A phosphoserine; by GWL mark is found at S62 and S104. The interval 74 to 112 is disordered; that stretch reads NKQLPAAAPDKTEVTGDHIPTPQDLPQRKPSLVASKLAG. Position 104 is a phosphoserine; by PKA (S104). At K109 the chain carries N6-acetyllysine.

Belongs to the endosulfine family. As to quaternary structure, interacts (when phosphorylated at Ser-62) with PPP2R2D. Interacts with SNCA. Interacts with PPP2R2A; the interaction is direct and this interaction inhibits PP2A activity. In terms of processing, phosphorylation at Ser-62 by MASTL/GWL during mitosis is essential for interaction with PPP2R2D (PR55-delta) and subsequent inactivation of PP2A. Phosphorylated by PKA.

Its subcellular location is the cytoplasm. In terms of biological role, protein phosphatase inhibitor that specifically inhibits protein phosphatase 2A (PP2A) during mitosis. Inhibition of PP2A is enhanced when ARPP19 is phosphorylated. When phosphorylated at Ser-62 during mitosis, specifically interacts with PPP2R2D (PR55-delta) and inhibits its activity, leading to inactivation of PP2A, an essential condition to keep cyclin-B1-CDK1 activity high during M phase. May indirectly enhance GAP-43 expression by binding to the NGF-regulatory region of its mRNA. The sequence is that of cAMP-regulated phosphoprotein 19 (Arpp19) from Mus musculus (Mouse).